The following is a 195-amino-acid chain: Pyridoxal 5'-phosphate synthase subunit PdxT (195 aa).

Residue 46–48 (GES) coordinates L-glutamine. Cys-78 serves as the catalytic Nucleophile. L-glutamine contacts are provided by residues Arg-106 and 134–135 (IR). Active-site charge relay system residues include His-170 and Glu-172.

The protein belongs to the glutaminase PdxT/SNO family. In terms of assembly, in the presence of PdxS, forms a dodecamer of heterodimers. Only shows activity in the heterodimer.

It carries out the reaction aldehydo-D-ribose 5-phosphate + D-glyceraldehyde 3-phosphate + L-glutamine = pyridoxal 5'-phosphate + L-glutamate + phosphate + 3 H2O + H(+). The catalysed reaction is L-glutamine + H2O = L-glutamate + NH4(+). It functions in the pathway cofactor biosynthesis; pyridoxal 5'-phosphate biosynthesis. Functionally, catalyzes the hydrolysis of glutamine to glutamate and ammonia as part of the biosynthesis of pyridoxal 5'-phosphate. The resulting ammonia molecule is channeled to the active site of PdxS. This is Pyridoxal 5'-phosphate synthase subunit PdxT from Pseudothermotoga lettingae (strain ATCC BAA-301 / DSM 14385 / NBRC 107922 / TMO) (Thermotoga lettingae).